A 329-amino-acid polypeptide reads, in one-letter code: Tyrosine recombinase XerC 1 (329 aa).

The region spanning 14–101 (APPHPQIGAY…AWRGWYQWLA (88 aa)) is the Core-binding (CB) domain. The Tyr recombinase domain maps to 123-320 (RLPKALSVEQ…DFQHLAKIYD (198 aa)). Active-site residues include Arg163, Lys198, His272, Arg275, and His298. The active-site O-(3'-phospho-DNA)-tyrosine intermediate is Tyr307.

This sequence belongs to the 'phage' integrase family. XerC subfamily. Forms a cyclic heterotetrameric complex composed of two molecules of XerC and two molecules of XerD.

It localises to the cytoplasm. Functionally, site-specific tyrosine recombinase, which acts by catalyzing the cutting and rejoining of the recombining DNA molecules. The XerC-XerD complex is essential to convert dimers of the bacterial chromosome into monomers to permit their segregation at cell division. It also contributes to the segregational stability of plasmids. This chain is Tyrosine recombinase XerC 1 (xerC1), found in Ralstonia nicotianae (strain ATCC BAA-1114 / GMI1000) (Ralstonia solanacearum).